The primary structure comprises 1223 residues: Rho family-interacting cell polarization regulator 1 (1223 aa).

Ser-22 is subject to Phosphoserine. Residues 89–114 (LTAYLEVHQQEQEKLQGQIRESKRNS) are a coiled coil. 2 positions are modified to phosphoserine: Ser-349 and Ser-351. Phosphothreonine is present on Thr-355. The segment at 375–411 (NGTAWSLSSESSDDSSSPQLSGTARHSPAPRPLVQQP) is disordered. Low complexity predominate over residues 380 to 395 (SLSSESSDDSSSPQLS). A phosphoserine mark is found at Ser-456 and Ser-459. Disordered regions lie at residues 475-769 (ESLA…APQH) and 856-889 (FLNE…SPSA). Low complexity-rich tracts occupy residues 505–523 (GHSA…PTST) and 546–564 (PGPT…TTTH). Residues 565–592 (SAPSPLTHTTTGSTHKPIISTLTTTGPT) are compositionally biased toward polar residues. 2 stretches are compositionally biased toward low complexity: residues 601–650 (TTTS…PTPS) and 659–675 (TSPT…TTSP). Residues 680-695 (VSPSTSLELATLSSPS) show a composition bias toward polar residues. A compositionally biased stretch (acidic residues) spans 858–867 (NEDEDEDNDV). Phosphoserine occurs at positions 874 and 875.

This sequence belongs to the RIPOR family. As to quaternary structure, interacts (via N-terminus) with RHOA (GTP-bound form); this interaction links active RHOA to STK24 and STK26 kinases. Interacts with RHOB. Interacts with RHOC. Interacts (via C-terminus) with PDCD10; this interaction occurs in a Rho-independent manner. Interacts (via C-terminus) with STK24; this interaction occurs in a PDCD10-dependent and Rho-independent manner. Interacts (via C-terminus) with STK26; this interaction occurs in a PDCD10-dependent and Rho-independent manner. Interacts (via N-terminus) with 14-3-3 proteins; these interactions occur in a Rho-dependent manner.

Its subcellular location is the cytoplasm. It localises to the golgi apparatus. In terms of biological role, downstream effector protein for Rho-type small GTPases that plays a role in cell polarity and directional migration. Acts as an adapter protein, linking active Rho proteins to STK24 and STK26 kinases, and hence positively regulates Golgi reorientation in polarized cell migration upon Rho activation. Involved in the subcellular relocation of STK26 from the Golgi to cytoplasm punctae in a Rho- and PDCD10-dependent manner upon serum stimulation. This chain is Rho family-interacting cell polarization regulator 1 (RIPOR1), found in Homo sapiens (Human).